The chain runs to 395 residues: Flap endonuclease 1 (395 aa).

Positions 1-104 (MGIKHLFQVI…GELAKRTARK (104 aa)) are N-domain. Mg(2+) is bound at residue aspartate 34. Residues arginine 47 and arginine 70 each coordinate DNA. The Mg(2+) site is built by aspartate 86, glutamate 158, glutamate 160, aspartate 179, and aspartate 181. An I-domain region spans residues 122-253 (EIEKFSRRTV…NTALKLIREH (132 aa)). Glutamate 158 is a DNA binding site. Residues glycine 231 and aspartate 233 each coordinate DNA. Mg(2+) is bound at residue aspartate 233. The segment at 341–349 (QQSRLEGFF) is interaction with PCNA. The span at 356-389 (DAEKASLKRKHDEKLQEQKKRKKEEAKAKKEAKA) shows a compositional bias: basic and acidic residues. The segment at 356-395 (DAEKASLKRKHDEKLQEQKKRKKEEAKAKKEAKAKPRGAA) is disordered.

It belongs to the XPG/RAD2 endonuclease family. FEN1 subfamily. In terms of assembly, interacts with PCNA. Three molecules of fen1 bind to one PCNA trimer with each molecule binding to one PCNA monomer. PCNA stimulates the nuclease activity without altering cleavage specificity. Requires Mg(2+) as cofactor. Post-translationally, phosphorylated. Phosphorylation upon DNA damage induces relocalization to the nuclear plasma.

The protein resides in the nucleus. It localises to the nucleolus. It is found in the nucleoplasm. The protein localises to the mitochondrion. Functionally, structure-specific nuclease with 5'-flap endonuclease and 5'-3' exonuclease activities involved in DNA replication and repair. During DNA replication, cleaves the 5'-overhanging flap structure that is generated by displacement synthesis when DNA polymerase encounters the 5'-end of a downstream Okazaki fragment. It enters the flap from the 5'-end and then tracks to cleave the flap base, leaving a nick for ligation. Also involved in the long patch base excision repair (LP-BER) pathway, by cleaving within the apurinic/apyrimidinic (AP) site-terminated flap. Acts as a genome stabilization factor that prevents flaps from equilibrating into structures that lead to duplications and deletions. Also possesses 5'-3' exonuclease activity on nicked or gapped double-stranded DNA, and exhibits RNase H activity. Also involved in replication and repair of rDNA and in repairing mitochondrial DNA. The protein is Flap endonuclease 1 (fen1) of Aspergillus clavatus (strain ATCC 1007 / CBS 513.65 / DSM 816 / NCTC 3887 / NRRL 1 / QM 1276 / 107).